The chain runs to 338 residues: D-erythrose-4-phosphate dehydrogenase (338 aa).

11–12 (RI) is an NAD(+) binding site. Substrate contacts are provided by residues 153–155 (SCT), arginine 199, 212–213 (TK), and arginine 235. The active-site Nucleophile is the cysteine 154. Asparagine 317 contacts NAD(+).

Belongs to the glyceraldehyde-3-phosphate dehydrogenase family. Epd subfamily. Homotetramer.

It localises to the cytoplasm. The catalysed reaction is D-erythrose 4-phosphate + NAD(+) + H2O = 4-phospho-D-erythronate + NADH + 2 H(+). It participates in cofactor biosynthesis; pyridoxine 5'-phosphate biosynthesis; pyridoxine 5'-phosphate from D-erythrose 4-phosphate: step 1/5. In terms of biological role, catalyzes the NAD-dependent conversion of D-erythrose 4-phosphate to 4-phosphoerythronate. This chain is D-erythrose-4-phosphate dehydrogenase, found in Shewanella amazonensis (strain ATCC BAA-1098 / SB2B).